Consider the following 307-residue polypeptide: Aspartate carbamoyltransferase catalytic subunit (307 aa).

Carbamoyl phosphate-binding residues include R56 and T57. Residue K84 participates in L-aspartate binding. R106, H136, and Q139 together coordinate carbamoyl phosphate. Residues R169 and R221 each contribute to the L-aspartate site. Carbamoyl phosphate contacts are provided by A262 and P263.

Belongs to the aspartate/ornithine carbamoyltransferase superfamily. ATCase family. In terms of assembly, heterododecamer (2C3:3R2) of six catalytic PyrB chains organized as two trimers (C3), and six regulatory PyrI chains organized as three dimers (R2).

It carries out the reaction carbamoyl phosphate + L-aspartate = N-carbamoyl-L-aspartate + phosphate + H(+). The protein operates within pyrimidine metabolism; UMP biosynthesis via de novo pathway; (S)-dihydroorotate from bicarbonate: step 2/3. Its function is as follows. Catalyzes the condensation of carbamoyl phosphate and aspartate to form carbamoyl aspartate and inorganic phosphate, the committed step in the de novo pyrimidine nucleotide biosynthesis pathway. The sequence is that of Aspartate carbamoyltransferase catalytic subunit from Streptococcus pneumoniae serotype 2 (strain D39 / NCTC 7466).